Reading from the N-terminus, the 568-residue chain is Sphingosine-1-phosphate lyase 1 (568 aa).

At 1–40 (MPGTDLLKLKDFEPYLEILESYSTKAKNYVNGYCTKYEPW) the chain is on the lumenal side. Residues 41 to 61 (QLIAWSVLCTLLIVWVYELIF) traverse the membrane as a helical; Signal-anchor for type III membrane protein segment. The Cytoplasmic portion of the chain corresponds to 62-568 (QPESLWSRFK…NQMNGSPKPR (507 aa)). Residue lysine 353 is modified to N6-(pyridoxal phosphate)lysine; alternate. The residue at position 353 (lysine 353) is an N6-acetyllysine; alternate. Tyrosine 356 and tyrosine 366 each carry 3'-nitrotyrosine. Residue serine 564 is modified to Phosphoserine.

It belongs to the group II decarboxylase family. Sphingosine-1-phosphate lyase subfamily. Requires pyridoxal 5'-phosphate as cofactor. As to expression, highest levels are found in liver, small intestine and thymus, followed by kidney, lung, heart, spleen and brain (at protein level). Also detected in stomach, testis and skeletal muscle (at protein level).

Its subcellular location is the endoplasmic reticulum membrane. The enzyme catalyses sphinganine 1-phosphate = hexadecanal + phosphoethanolamine. It carries out the reaction sphing-4-enine 1-phosphate = (2E)-hexadecenal + phosphoethanolamine. It functions in the pathway lipid metabolism; sphingolipid metabolism. In terms of biological role, cleaves phosphorylated sphingoid bases (PSBs), such as sphingosine-1-phosphate, into fatty aldehydes and phosphoethanolamine. Elevates stress-induced ceramide production and apoptosis. Required for global lipid homeostasis in liver and cholesterol homeostasis in fibroblasts. Involved in the regulation of pro-inflammatory response and neutrophil trafficking. Modulates neuronal autophagy via phosphoethanolamine production which regulates accumulation of aggregate-prone proteins such as APP. Seems to play a role in establishing neuronal contact sites and axonal maintenance. This is Sphingosine-1-phosphate lyase 1 from Mus musculus (Mouse).